Here is a 175-residue protein sequence, read N- to C-terminus: Probable chemoreceptor glutamine deamidase CheD (175 aa).

Belongs to the CheD family.

The catalysed reaction is L-glutaminyl-[protein] + H2O = L-glutamyl-[protein] + NH4(+). Functionally, probably deamidates glutamine residues to glutamate on methyl-accepting chemotaxis receptors (MCPs), playing an important role in chemotaxis. The protein is Probable chemoreceptor glutamine deamidase CheD of Jannaschia sp. (strain CCS1).